Consider the following 89-residue polypeptide: Pigment-dispersing hormone peptides (89 aa).

The N-terminal stretch at 1 to 22 (MTAMAVSGKLLTALVLSTYILG) is a signal peptide. Alanine amide is present on Ala86.

Belongs to the arthropod PDH family.

The protein localises to the secreted. Its function is as follows. Capable of inducing pigment dispersion in the chromatophores of the fiddler crab Uca pugilator. In Romalea microptera (Eastern lubber grasshopper), this protein is Pigment-dispersing hormone peptides.